The following is a 782-amino-acid chain: MGSKITDKKRKSRDSESESDDELANGLFDGILSQSEDEEDYLPSDDDDDVEDSENEGTGASEDDDDDDDDDDILSDDIPSDVDSEEAINRLVKQQEELEITEPGVDPKREEDDGADRNYRIEKDANGGERYVYDEIDPVYDSDDSDAKGPVNTIGDIPLSFYDSYPHIGYDINGKKIMRPATGDALQSLLDSIEVPKGWTGLTDVDTGNPLNLTQDELELVRRVQMGLLPTDLQDPYPDTVEYFTSIEEKMPLSSAPEPKRRFLPSKNEAKQIMKLVRAIREGRILPYKPPEEREREEEEQEEVHFDLWQNEEPQAPNPMHIPAPKLAPPGYDLSYNPPEEYLPSKEEREEWENADPEDREKEYLPQKHNALRKVPAWGNLVKERFERCMDLYLAPRIRKNRLNIDPNSLLPKLPSPSELKPFPTVAQTIFRGHEGRVRSVSVDPTGVALATGGDDGTVRVWELLTGRQVWSVKLNSEEPVNAVRWRPTKDAFVLAAAAGEDIFLMVPTHASVTPALDQASRDILATGFGYATNGQQPAAPVSKEPAAKWARPGTKLEDEGVLIRITVRSTVKVINWHRRGDHFATVSPTGQRSSVAIHTLSKHLTQIPFRKLSGLAQTAAFHPLRPLFFVATQRTIRCYDLQKLELVKVVQPGAKWISSFDIHPGGDNLIVGSYDKRLLWHDLDLSNRPYKTMRFHGQAIRQVRYHRGGLPLFADASDDGSLQIFHGKVPNDQLENPTIVPVKMLKGHKVVSKLGVLDIDWHPREPWCVSAGADGTARLWM.

Disordered regions lie at residues 1–123 and 339–361; these read MGSK…RIEK and PEEYLPSKEEREEWENADPEDRE. Residues 35 to 86 show a composition bias toward acidic residues; that stretch reads SEDEEDYLPSDDDDDVEDSENEGTGASEDDDDDDDDDDILSDDIPSDVDSEE. Residues 105-123 are compositionally biased toward basic and acidic residues; it reads VDPKREEDDGADRNYRIEK. 7 WD repeats span residues 433-472, 476-516, 567-609, 612-650, 653-692, 696-736, and 752-782; these read GHEGRVRSVSVDPTGVALATGGDDGTVRVWELLTGRQVWS, NSEE…VTPA, TVRS…TQIP, KLSGLAQTAAFHPLRPLFFVATQRTIRCYDLQKLELVKV, PGAKWISSFDIHPGGDNLIVGSYDKRLLWHDLDLSNRPYK, FHGQ…DQLE, and VSKLGVLDIDWHPREPWCVSAGADGTARLWM.

The protein belongs to the WD repeat BOP1/ERB1 family. As to quaternary structure, component of the NOP7 complex, composed of ERB1, NOP7 and YTM1. The complex is held together by ERB1, which interacts with NOP7 via its N-terminal domain and with YTM1 via a high-affinity interaction between the seven-bladed beta-propeller domains of the 2 proteins. The NOP7 complex associates with the 66S pre-ribosome.

The protein resides in the nucleus. It localises to the nucleolus. The protein localises to the nucleoplasm. In terms of biological role, component of the NOP7 complex, which is required for maturation of the 25S and 5.8S ribosomal RNAs and formation of the 60S ribosome. In Chaetomium globosum (strain ATCC 6205 / CBS 148.51 / DSM 1962 / NBRC 6347 / NRRL 1970) (Soil fungus), this protein is Ribosome biogenesis protein ERB1.